The sequence spans 385 residues: Flap endonuclease 1 (385 aa).

The tract at residues 1 to 104 (MGILGLSKLI…GELAKRAERR (104 aa)) is N-domain. Asp34 contributes to the Mg(2+) binding site. DNA-binding residues include Arg47 and Arg70. Mg(2+) is bound by residues Asp86, Glu158, Glu160, Asp179, and Asp181. The interval 122–253 (GIEKFNRRLV…KRAIELINTY (132 aa)) is I-domain. Residue Glu158 coordinates DNA. Gly231 and Asp233 together coordinate DNA. Asp233 is a binding site for Mg(2+). Residues 336–344 (TQVRLDSFF) form an interaction with PCNA region. The disordered stretch occupies residues 346–385 (TLPSTPNATNAAKRKAEEAKKSANNKKAKTSGGGRGRRPK). Over residues 368–385 (ANNKKAKTSGGGRGRRPK) the composition is skewed to basic residues.

Belongs to the XPG/RAD2 endonuclease family. FEN1 subfamily. In terms of assembly, interacts with PCNA. Three molecules of FEN1 bind to one PCNA trimer with each molecule binding to one PCNA monomer. PCNA stimulates the nuclease activity without altering cleavage specificity. It depends on Mg(2+) as a cofactor. In terms of processing, phosphorylated. Phosphorylation upon DNA damage induces relocalization to the nuclear plasma.

The protein resides in the nucleus. Its subcellular location is the nucleolus. The protein localises to the nucleoplasm. It is found in the mitochondrion. In terms of biological role, structure-specific nuclease with 5'-flap endonuclease and 5'-3' exonuclease activities involved in DNA replication and repair. During DNA replication, cleaves the 5'-overhanging flap structure that is generated by displacement synthesis when DNA polymerase encounters the 5'-end of a downstream Okazaki fragment. It enters the flap from the 5'-end and then tracks to cleave the flap base, leaving a nick for ligation. Also involved in the long patch base excision repair (LP-BER) pathway, by cleaving within the apurinic/apyrimidinic (AP) site-terminated flap. Acts as a genome stabilization factor that prevents flaps from equilibrating into structures that lead to duplications and deletions. Also possesses 5'-3' exonuclease activity on nicked or gapped double-stranded DNA, and exhibits RNase H activity. Also involved in replication and repair of rDNA and in repairing mitochondrial DNA. This is Flap endonuclease 1 from Drosophila melanogaster (Fruit fly).